The sequence spans 502 residues: UPF0371 protein CLD_0424 (502 aa).

The protein belongs to the UPF0371 family.

In Clostridium botulinum (strain Okra / Type B1), this protein is UPF0371 protein CLD_0424.